Reading from the N-terminus, the 162-residue chain is NADH-quinone oxidoreductase subunit I 2 (162 aa).

2 consecutive 4Fe-4S ferredoxin-type domains span residues 53-83 (LRRYPNGEERCIACKLCEAVCPALAITIESE) and 93-122 (TRYDIDLTKCIFCGFCEESCPVDSIVETRI). Cysteine 63, cysteine 66, cysteine 69, cysteine 73, cysteine 102, cysteine 105, cysteine 108, and cysteine 112 together coordinate [4Fe-4S] cluster.

This sequence belongs to the complex I 23 kDa subunit family. In terms of assembly, NDH-1 is composed of 14 different subunits. Subunits NuoA, H, J, K, L, M, N constitute the membrane sector of the complex. [4Fe-4S] cluster serves as cofactor.

It localises to the cell inner membrane. The catalysed reaction is a quinone + NADH + 5 H(+)(in) = a quinol + NAD(+) + 4 H(+)(out). Its function is as follows. NDH-1 shuttles electrons from NADH, via FMN and iron-sulfur (Fe-S) centers, to quinones in the respiratory chain. The immediate electron acceptor for the enzyme in this species is believed to be ubiquinone. Couples the redox reaction to proton translocation (for every two electrons transferred, four hydrogen ions are translocated across the cytoplasmic membrane), and thus conserves the redox energy in a proton gradient. In Nitrosospira multiformis (strain ATCC 25196 / NCIMB 11849 / C 71), this protein is NADH-quinone oxidoreductase subunit I 2.